Here is a 168-residue protein sequence, read N- to C-terminus: Protein-export protein SecB (168 aa).

The segment at 1–21 is disordered; that stretch reads MADQPSGNNDAKQAETNGNTV.

It belongs to the SecB family. Homotetramer, a dimer of dimers. One homotetramer interacts with 1 SecA dimer.

The protein resides in the cytoplasm. In terms of biological role, one of the proteins required for the normal export of preproteins out of the cell cytoplasm. It is a molecular chaperone that binds to a subset of precursor proteins, maintaining them in a translocation-competent state. It also specifically binds to its receptor SecA. The chain is Protein-export protein SecB from Chelativorans sp. (strain BNC1).